A 348-amino-acid polypeptide reads, in one-letter code: Dihydroorotase (348 aa).

Residues His17 and His19 each contribute to the Zn(2+) site. Substrate contacts are provided by residues 19 to 21 and Asn45; that span reads HLR. Positions 103, 140, and 178 each coordinate Zn(2+). Residue Lys103 is modified to N6-carboxylysine. Residue His140 participates in substrate binding. Leu223 serves as a coordination point for substrate. Residue Asp251 coordinates Zn(2+). The active site involves Asp251. Residues His255 and Ala267 each coordinate substrate.

The protein belongs to the metallo-dependent hydrolases superfamily. DHOase family. Class II DHOase subfamily. Homodimer. It depends on Zn(2+) as a cofactor.

The catalysed reaction is (S)-dihydroorotate + H2O = N-carbamoyl-L-aspartate + H(+). The protein operates within pyrimidine metabolism; UMP biosynthesis via de novo pathway; (S)-dihydroorotate from bicarbonate: step 3/3. Its function is as follows. Catalyzes the reversible cyclization of carbamoyl aspartate to dihydroorotate. This chain is Dihydroorotase, found in Yersinia enterocolitica serotype O:8 / biotype 1B (strain NCTC 13174 / 8081).